The sequence spans 400 residues: GTPase Obg (400 aa).

The Obg domain maps to 1–159 (MRFVDEAVIT…REIRLELKVL (159 aa)). The OBG-type G domain maps to 160-333 (ADVGLLGMPN…VVYYLMDQIE (174 aa)). GTP contacts are provided by residues 166 to 173 (GMPNAGKS), 191 to 195 (FTTMV), 213 to 216 (DIPG), 283 to 286 (NKLD), and 314 to 316 (SGL). Serine 173 and threonine 193 together coordinate Mg(2+).

It belongs to the TRAFAC class OBG-HflX-like GTPase superfamily. OBG GTPase family. As to quaternary structure, monomer. The cofactor is Mg(2+).

It is found in the cytoplasm. An essential GTPase which binds GTP, GDP and possibly (p)ppGpp with moderate affinity, with high nucleotide exchange rates and a fairly low GTP hydrolysis rate. Plays a role in control of the cell cycle, stress response, ribosome biogenesis and in those bacteria that undergo differentiation, in morphogenesis control. In Acinetobacter baylyi (strain ATCC 33305 / BD413 / ADP1), this protein is GTPase Obg.